A 275-amino-acid chain; its full sequence is Large ribosomal subunit protein uL2 (275 aa).

2 disordered regions span residues 28 to 59 and 224 to 275; these read KPFA…GGHK and AMNP…RHKR. A compositionally biased stretch (polar residues) spans 35-49; the sequence is DSQSTTAGRNNNGHI. The segment covering 50 to 59 has biased composition (basic residues); sequence TTRHKGGGHK.

The protein belongs to the universal ribosomal protein uL2 family. Part of the 50S ribosomal subunit. Forms a bridge to the 30S subunit in the 70S ribosome.

Its function is as follows. One of the primary rRNA binding proteins. Required for association of the 30S and 50S subunits to form the 70S ribosome, for tRNA binding and peptide bond formation. It has been suggested to have peptidyltransferase activity; this is somewhat controversial. Makes several contacts with the 16S rRNA in the 70S ribosome. The protein is Large ribosomal subunit protein uL2 of Paraburkholderia xenovorans (strain LB400).